Here is a 490-residue protein sequence, read N- to C-terminus: Protein nucleotidyltransferase YdiU (490 aa).

8 residues coordinate ATP: Gly-94, Gly-96, Arg-97, Lys-117, Asp-129, Gly-130, Arg-180, and Arg-187. The active-site Proton acceptor is the Asp-256. Asn-257 and Asp-266 together coordinate Mg(2+). An ATP-binding site is contributed by Asp-266.

It belongs to the SELO family. Mg(2+) is required as a cofactor. Mn(2+) serves as cofactor.

The catalysed reaction is L-seryl-[protein] + ATP = 3-O-(5'-adenylyl)-L-seryl-[protein] + diphosphate. It catalyses the reaction L-threonyl-[protein] + ATP = 3-O-(5'-adenylyl)-L-threonyl-[protein] + diphosphate. The enzyme catalyses L-tyrosyl-[protein] + ATP = O-(5'-adenylyl)-L-tyrosyl-[protein] + diphosphate. It carries out the reaction L-histidyl-[protein] + UTP = N(tele)-(5'-uridylyl)-L-histidyl-[protein] + diphosphate. The catalysed reaction is L-seryl-[protein] + UTP = O-(5'-uridylyl)-L-seryl-[protein] + diphosphate. It catalyses the reaction L-tyrosyl-[protein] + UTP = O-(5'-uridylyl)-L-tyrosyl-[protein] + diphosphate. Functionally, nucleotidyltransferase involved in the post-translational modification of proteins. It can catalyze the addition of adenosine monophosphate (AMP) or uridine monophosphate (UMP) to a protein, resulting in modifications known as AMPylation and UMPylation. The sequence is that of Protein nucleotidyltransferase YdiU from Clostridium perfringens (strain SM101 / Type A).